A 347-amino-acid chain; its full sequence is NADH-ubiquinone oxidoreductase chain 2 (347 aa).

Transmembrane regions (helical) follow at residues 1–21 (MNPL…AIVA), 25–45 (HWLM…PILM), 59–79 (YFLT…MNLV), 111–131 (FHFW…LILL), 149–169 (INLD…GWGG), 178–198 (IMAY…TYNP), 201–221 (TLLN…MFML), 237–257 (MPLL…LPPL), 274–294 (NSVI…YFYM), and 326–346 (LSPL…LALL).

This sequence belongs to the complex I subunit 2 family. In terms of assembly, core subunit of respiratory chain NADH dehydrogenase (Complex I) which is composed of 45 different subunits. Interacts with TMEM242.

The protein localises to the mitochondrion inner membrane. The catalysed reaction is a ubiquinone + NADH + 5 H(+)(in) = a ubiquinol + NAD(+) + 4 H(+)(out). Core subunit of the mitochondrial membrane respiratory chain NADH dehydrogenase (Complex I) which catalyzes electron transfer from NADH through the respiratory chain, using ubiquinone as an electron acceptor. Essential for the catalytic activity and assembly of complex I. This chain is NADH-ubiquinone oxidoreductase chain 2, found in Pteropus rodricensis (Rodriguez flying fox).